The sequence spans 527 residues: Serine/threonine-protein kinase NLK (527 aa).

2 sufficient for interaction with DAPK3 regions span residues M1–H125 and H124–I416. Required for interaction with TAB2 regions lie at residues M1–Q304 and Y434–E527. Disordered stretches follow at residues A22–A72 and Q90–E139. Basic residues predominate over residues G26–H54. Positions P103 to A119 are enriched in low complexity. A compositionally biased stretch (basic residues) spans K122–H131. Positions I138–L427 constitute a Protein kinase domain. Residues I144–V152 and K167 contribute to the ATP site. D264 acts as the Proton acceptor in catalysis. T298 carries the phosphothreonine; by autocatalysis modification. The short motif at T298–E300 is the TQE element. The required for homodimerization and kinase activation and localization to the nucleus stretch occupies residues D428–E527. S522 carries the post-translational modification Phosphoserine.

The protein belongs to the protein kinase superfamily. CMGC Ser/Thr protein kinase family. MAP kinase subfamily. In terms of assembly, homodimer. Homodimerization is required for intermolecular autophosphorylation, kinase activation and nuclear localization. Interacts with RNF138/NARF. Interacts with FOXO1 and FOXO3. Interacts with the upstream activating kinases HIPK2 and MAP3K7/TAK1. Interaction with MAP3K7/TAK1 seems to be indirect, and may be mediated by other proteins such as STAT3, TAB1 and TAB2. Interacts with and phosphorylates a number of transcription factors including FOXO4, LEF1, MYB, MYBL1, MYBL2, NOTCH1 and TCF7L2/TCF4. May interact with components of cullin-RING-based SCF (SKP1-CUL1-F-box protein) E3 ubiquitin-protein ligase complexes. Interacts with MEF2A. Interacts with ATF5; the interaction stabilizes ATF5 at the protein level in a kinase-independent manner. The cofactor is Mg(2+). In terms of processing, phosphorylated on Thr-298. Intermolecular autophosphorylation on Thr-298 activates the enzyme. As to expression, expressed at high levels in the brain, and at lower levels in heart, kidney, lung and liver.

The protein localises to the nucleus. Its subcellular location is the cytoplasm. The catalysed reaction is L-seryl-[protein] + ATP = O-phospho-L-seryl-[protein] + ADP + H(+). It carries out the reaction L-threonyl-[protein] + ATP = O-phospho-L-threonyl-[protein] + ADP + H(+). Activated by the non-canonical Wnt signaling pathway, in which WNT5A leads to activation of MAP3K7/TAK1 and HIPK2, which subsequently phosphorylates and activates this protein. Activated by dimerization and subsequent intermolecular autophosphorylation on Thr-298. Other cytokines such as IL6 may also activate this regulatory circuit. Serine/threonine-protein kinase that regulates a number of transcription factors with key roles in cell fate determination. Positive effector of the non-canonical Wnt signaling pathway, acting downstream of WNT5A, MAP3K7/TAK1 and HIPK2. Negative regulator of the canonical Wnt/beta-catenin signaling pathway. Binds to and phosphorylates TCF7L2/TCF4 and LEF1, promoting the dissociation of the TCF7L2/LEF1/beta-catenin complex from DNA, as well as the ubiquitination and subsequent proteolysis of LEF1. Together these effects inhibit the transcriptional activation of canonical Wnt/beta-catenin target genes. Negative regulator of the Notch signaling pathway. Binds to and phosphorylates NOTCH1, thereby preventing the formation of a transcriptionally active ternary complex of NOTCH1, RBPJ/RBPSUH and MAML1. Negative regulator of the MYB family of transcription factors. Phosphorylation of MYB leads to its subsequent proteolysis while phosphorylation of MYBL1 and MYBL2 inhibits their interaction with the coactivator CREBBP. Other transcription factors may also be inhibited by direct phosphorylation of CREBBP itself. Acts downstream of IL6 and MAP3K7/TAK1 to phosphorylate STAT3, which is in turn required for activation of NLK by MAP3K7/TAK1. Upon IL1B stimulus, cooperates with ATF5 to activate the transactivation activity of C/EBP subfamily members. Phosphorylates ATF5 but also stabilizes ATF5 protein levels in a kinase-independent manner. Acts as an inhibitor of the mTORC1 complex in response to osmotic stress by mediating phosphorylation of RPTOR, thereby preventing recruitment of the mTORC1 complex to lysosomes. This Mus musculus (Mouse) protein is Serine/threonine-protein kinase NLK.